The following is a 386-amino-acid chain: Chaperone protein DnaJ (386 aa).

Residues 5 to 70 (DYYEVLGVER…QKRAAYDRYG (66 aa)) enclose the J domain. The CR-type zinc-finger motif lies at 138 to 216 (GKDETIHVPQ…CGGHGQVKEE (79 aa)). Zn(2+) contacts are provided by Cys151, Cys154, Cys168, Cys171, Cys190, Cys193, Cys204, and Cys207. CXXCXGXG motif repeat units lie at residues 151 to 158 (CRPCEGTG), 168 to 175 (CETCGGHG), 190 to 197 (CHICQGRG), and 204 to 211 (CKTCGGHG).

Belongs to the DnaJ family. As to quaternary structure, homodimer. Zn(2+) serves as cofactor.

It is found in the cytoplasm. Its function is as follows. Participates actively in the response to hyperosmotic and heat shock by preventing the aggregation of stress-denatured proteins and by disaggregating proteins, also in an autonomous, DnaK-independent fashion. Unfolded proteins bind initially to DnaJ; upon interaction with the DnaJ-bound protein, DnaK hydrolyzes its bound ATP, resulting in the formation of a stable complex. GrpE releases ADP from DnaK; ATP binding to DnaK triggers the release of the substrate protein, thus completing the reaction cycle. Several rounds of ATP-dependent interactions between DnaJ, DnaK and GrpE are required for fully efficient folding. Also involved, together with DnaK and GrpE, in the DNA replication of plasmids through activation of initiation proteins. The sequence is that of Chaperone protein DnaJ from Hyphomonas neptunium (strain ATCC 15444).